Here is a 325-residue protein sequence, read N- to C-terminus: Elongation factor P--(R)-beta-lysine ligase (325 aa).

76-78 (SPE) provides a ligand contact to substrate. Residues 100–102 (RNE) and asparagine 109 each bind ATP. Position 118 (tyrosine 118) interacts with substrate. 244-245 (EL) contributes to the ATP binding site. Residue glutamate 251 coordinates substrate. Position 300 (glycine 300) interacts with ATP.

It belongs to the class-II aminoacyl-tRNA synthetase family. EpmA subfamily. Homodimer.

It catalyses the reaction D-beta-lysine + L-lysyl-[protein] + ATP = N(6)-((3R)-3,6-diaminohexanoyl)-L-lysyl-[protein] + AMP + diphosphate + H(+). Functionally, with EpmB is involved in the beta-lysylation step of the post-translational modification of translation elongation factor P (EF-P) on 'Lys-34'. Catalyzes the ATP-dependent activation of (R)-beta-lysine produced by EpmB, forming a lysyl-adenylate, from which the beta-lysyl moiety is then transferred to the epsilon-amino group of EF-P 'Lys-34'. This chain is Elongation factor P--(R)-beta-lysine ligase, found in Salmonella agona (strain SL483).